The sequence spans 185 residues: Tetratricopeptide repeat protein 36 homolog (185 aa).

TPR repeat units lie at residues 53–86 (SREL…AQRA), 88–119 (VLNN…ASDQ), and 125–158 (CHAH…GSKF).

The protein belongs to the TTC36 family.

This chain is Tetratricopeptide repeat protein 36 homolog, found in Drosophila pseudoobscura pseudoobscura (Fruit fly).